The sequence spans 155 residues: uncharacterized protein (155 aa).

The N-terminal stretch at 1–24 (MQQLSKRRLSALFVTAFLPVTAFA) is a signal peptide.

This is an uncharacterized protein from Chromohalobacter salexigens (strain ATCC BAA-138 / DSM 3043 / CIP 106854 / NCIMB 13768 / 1H11).